A 134-amino-acid polypeptide reads, in one-letter code: UPF0216 protein AF_0460 (134 aa).

It belongs to the UPF0216 family.

The sequence is that of UPF0216 protein AF_0460 from Archaeoglobus fulgidus (strain ATCC 49558 / DSM 4304 / JCM 9628 / NBRC 100126 / VC-16).